A 208-amino-acid polypeptide reads, in one-letter code: Uracil phosphoribosyltransferase (208 aa).

5-phospho-alpha-D-ribose 1-diphosphate-binding positions include R78, R103, and 130-138 (DPMLATGGT). Residues I193 and 198-200 (GDA) contribute to the uracil site. D199 provides a ligand contact to 5-phospho-alpha-D-ribose 1-diphosphate.

It belongs to the UPRTase family. Mg(2+) is required as a cofactor.

The catalysed reaction is UMP + diphosphate = 5-phospho-alpha-D-ribose 1-diphosphate + uracil. It functions in the pathway pyrimidine metabolism; UMP biosynthesis via salvage pathway; UMP from uracil: step 1/1. Its activity is regulated as follows. Allosterically activated by GTP. Functionally, catalyzes the conversion of uracil and 5-phospho-alpha-D-ribose 1-diphosphate (PRPP) to UMP and diphosphate. This Nitratidesulfovibrio vulgaris (strain DSM 19637 / Miyazaki F) (Desulfovibrio vulgaris) protein is Uracil phosphoribosyltransferase.